The following is a 160-amino-acid chain: Ribosomal RNA large subunit methyltransferase H (160 aa).

S-adenosyl-L-methionine contacts are provided by residues leucine 76, glycine 108, and 127 to 132; that span reads LGKMTW.

It belongs to the RNA methyltransferase RlmH family. In terms of assembly, homodimer.

Its subcellular location is the cytoplasm. The enzyme catalyses pseudouridine(1915) in 23S rRNA + S-adenosyl-L-methionine = N(3)-methylpseudouridine(1915) in 23S rRNA + S-adenosyl-L-homocysteine + H(+). Its function is as follows. Specifically methylates the pseudouridine at position 1915 (m3Psi1915) in 23S rRNA. This Rhizobium etli (strain ATCC 51251 / DSM 11541 / JCM 21823 / NBRC 15573 / CFN 42) protein is Ribosomal RNA large subunit methyltransferase H.